An 842-amino-acid chain; its full sequence is Microcephalin (842 aa).

One can recognise a BRCT 1 domain in the interval 1-93; that stretch reads MAAPILKDVV…AHIDESLFPA (93 aa). A phosphoserine mark is found at Ser-279, Ser-287, Ser-296, and Ser-333. The residue at position 335 (Thr-335) is a Phosphothreonine. The span at 346–359 shows a compositional bias: basic residues; that stretch reads HSRPRSSSVKRKRV. Disordered regions lie at residues 346-375, 418-443, and 563-624; these read HSRPRSSSVKRKRVSYGFHSPPKEKCKRKR, PDNLKERNSENLPPKSQLPSNPAQFS, and VGLK…PTRR. Polar residues-rich tracts occupy residues 434-443 and 566-582; these read QLPSNPAQFS and KSTQDKGTTSKISNSSE. Residues 586 to 608 are compositionally biased toward basic and acidic residues; it reads PSEHEPRSVVDCNVERSAEEKEN. 2 BRCT domains span residues 647–737 and 758–840; these read SGKG…PFEL and YRGT…NYLL.

As to quaternary structure, interacts with CDC27 and maybe other components of the APC/C complex. Interacts with histone variant H2AX under DNA damage conditions.

The protein localises to the cytoplasm. It localises to the cytoskeleton. The protein resides in the microtubule organizing center. It is found in the centrosome. Functionally, implicated in chromosome condensation and DNA damage induced cellular responses. May play a role in neurogenesis and regulation of the size of the cerebral cortex. This is Microcephalin from Macaca fascicularis (Crab-eating macaque).